Consider the following 380-residue polypeptide: Glucose-1-phosphate adenylyltransferase (380 aa).

Residues Y99, G164, 179–180 (EK), and S190 each bind alpha-D-glucose 1-phosphate.

The protein belongs to the bacterial/plant glucose-1-phosphate adenylyltransferase family. As to quaternary structure, homotetramer.

The enzyme catalyses alpha-D-glucose 1-phosphate + ATP + H(+) = ADP-alpha-D-glucose + diphosphate. Its pathway is glycan biosynthesis; glycogen biosynthesis. Involved in the biosynthesis of ADP-glucose, a building block required for the elongation reactions to produce glycogen. Catalyzes the reaction between ATP and alpha-D-glucose 1-phosphate (G1P) to produce pyrophosphate and ADP-Glc. The sequence is that of Glucose-1-phosphate adenylyltransferase from Bacillus subtilis (strain 168).